We begin with the raw amino-acid sequence, 797 residues long: Discoidin domain-containing receptor tyrosine kinase B (797 aa).

The first 19 residues, 1–19 (MKLLLYLFGVTFHSNTVVA), serve as a signal peptide directing secretion. The Extracellular segment spans residues 20-384 (LELRECSHQL…VTEHDDGTSM (365 aa)). The F5/8 type C domain maps to 25-181 (CSHQLGMSNR…VCMRVEVFGC (157 aa)). A disulfide bond links cysteine 25 and cysteine 181. Positions 46–66 (SFDLQSTGPQHARAHQESGSG) are disordered. Asparagine 141, asparagine 167, asparagine 264, and asparagine 353 each carry an N-linked (GlcNAc...) asparagine glycan. The helical transmembrane segment at 385–405 (FAFIIFFFMFLIVAVIILTVL) threads the bilayer. Over 406–797 (YRKREYRVKA…LVHTSPHIHF (392 aa)) the chain is Cytoplasmic. Residues 527 to 785 (LICVSRIGQG…PSFENVHLHL (259 aa)) form the Protein kinase domain. Residues 533–541 (IGQGEFGEV) and lysine 554 contribute to the ATP site. Aspartate 645 serves as the catalytic Proton acceptor.

The protein belongs to the protein kinase superfamily. Tyr protein kinase family. Insulin receptor subfamily. In terms of assembly, interacts with shc-1. In terms of processing, autophosphorylated on tyrosine residues. Post-translationally, N-glycosylation at Asn-141 is required for axon regeneration after injury but is dispensable for kinase activity and axon localization. Expressed in some neurons in head and tail, some motoneurons in ventral nerve cord, in PVP interneurons, seam cells, rectal gland cells, vulva cells and some non-neuronal cells in the tail. Expressed in D-type motor neurons.

It is found in the cell membrane. The protein resides in the cell projection. Its subcellular location is the axon. It localises to the perikaryon. The catalysed reaction is L-tyrosyl-[protein] + ATP = O-phospho-L-tyrosyl-[protein] + ADP + H(+). Tyrosine-protein kinase receptor which, together with ddr-1, is involved in axon guidance to establish the tracts for the ventral and dorsal nerve cords during nervous system development. Acts upstream of the adapter shc-1, and the tyrosine kinase receptors svh-1 and svh-2 to regulate axon regeneration following injury in D-type motor neurons. May mediate axon regeneration in association with the collagen emb-9. The chain is Discoidin domain-containing receptor tyrosine kinase B from Caenorhabditis elegans.